Consider the following 176-residue polypeptide: SsrA-binding protein (176 aa).

The disordered stretch occupies residues 1 to 33 (MTEAGAKKAAGKKSGKGKGKNAKKNQPNITPVA). Positions 9-23 (AAGKKSGKGKGKNAK) are enriched in basic residues.

Belongs to the SmpB family.

Its subcellular location is the cytoplasm. Its function is as follows. Required for rescue of stalled ribosomes mediated by trans-translation. Binds to transfer-messenger RNA (tmRNA), required for stable association of tmRNA with ribosomes. tmRNA and SmpB together mimic tRNA shape, replacing the anticodon stem-loop with SmpB. tmRNA is encoded by the ssrA gene; the 2 termini fold to resemble tRNA(Ala) and it encodes a 'tag peptide', a short internal open reading frame. During trans-translation Ala-aminoacylated tmRNA acts like a tRNA, entering the A-site of stalled ribosomes, displacing the stalled mRNA. The ribosome then switches to translate the ORF on the tmRNA; the nascent peptide is terminated with the 'tag peptide' encoded by the tmRNA and targeted for degradation. The ribosome is freed to recommence translation, which seems to be the essential function of trans-translation. This Rhodopirellula baltica (strain DSM 10527 / NCIMB 13988 / SH1) protein is SsrA-binding protein.